The chain runs to 503 residues: Cytosolic carboxypeptidase 6 (503 aa).

One can recognise a Peptidase M14 domain in the interval 167–438; the sequence is YPYTYTRFQH…NVARTFLDYY (272 aa). Positions 230, 233, and 328 each coordinate Zn(2+). Catalysis depends on Glu-401, which acts as the Proton donor/acceptor. 2 stretches are compositionally biased toward basic and acidic residues: residues 459–469 and 487–503; these read IEVQRRKEKSP and KGDKKSSVNHKDPSTPF. The interval 459–503 is disordered; that stretch reads IEVQRRKEKSPPYKHPLLRGPASNYPNSKGDKKSSVNHKDPSTPF.

This sequence belongs to the peptidase M14 family. In terms of assembly, interacts with MYLK. The cofactor is Zn(2+).

It localises to the cytoplasm. Its subcellular location is the cytosol. The protein localises to the cytoskeleton. It is found in the microtubule organizing center. The protein resides in the centrosome. It localises to the centriole. Its subcellular location is the golgi apparatus. The protein localises to the cilium basal body. The enzyme catalyses (L-glutamyl)(n+1)-gamma-L-glutamyl-L-glutamyl-[protein] + H2O = (L-glutamyl)(n)-gamma-L-glutamyl-L-glutamyl-[protein] + L-glutamate. It carries out the reaction C-terminal L-alpha-aminoacyl-L-glutamyl-L-glutamyl-[tubulin] + H2O = C-terminal L-alpha-aminoacyl-L-glutamyl-[tubulin] + L-glutamate. In terms of biological role, metallocarboxypeptidase that mediates protein deglutamylation of tubulin and non-tubulin target proteins. Catalyzes the removal of polyglutamate side chains present on the gamma-carboxyl group of glutamate residues within the C-terminal tail of tubulin protein. Specifically cleaves tubulin long-side-chains, while it is not able to remove the branching point glutamate. Also catalyzes the removal of polyglutamate residues from the carboxy-terminus of non-tubulin proteins such as MYLK. Mediates the deglutamylation of nucleotidyltransferase CGAS, leading to CGAS antiviral defense response activation. Involved in KLF4 deglutamylation which promotes KLF4 proteasome-mediated degradation, thereby negatively regulating cell pluripotency maintenance and embryogenesis. The protein is Cytosolic carboxypeptidase 6 of Homo sapiens (Human).